We begin with the raw amino-acid sequence, 349 residues long: S-adenosylmethionine:tRNA ribosyltransferase-isomerase (349 aa).

The protein belongs to the QueA family. Monomer.

It localises to the cytoplasm. It catalyses the reaction 7-aminomethyl-7-carbaguanosine(34) in tRNA + S-adenosyl-L-methionine = epoxyqueuosine(34) in tRNA + adenine + L-methionine + 2 H(+). Its pathway is tRNA modification; tRNA-queuosine biosynthesis. Its function is as follows. Transfers and isomerizes the ribose moiety from AdoMet to the 7-aminomethyl group of 7-deazaguanine (preQ1-tRNA) to give epoxyqueuosine (oQ-tRNA). This chain is S-adenosylmethionine:tRNA ribosyltransferase-isomerase, found in Pseudomonas putida (strain GB-1).